Reading from the N-terminus, the 179-residue chain is tRNA-splicing endonuclease (179 aa).

Residues tyrosine 115, histidine 123, and lysine 154 contribute to the active site.

This sequence belongs to the tRNA-intron endonuclease family. Archaeal short subfamily. In terms of assembly, homotetramer; although the tetramer contains four active sites, only two participate in the cleavage. Therefore, it should be considered as a dimer of dimers.

The enzyme catalyses pretRNA = a 3'-half-tRNA molecule with a 5'-OH end + a 5'-half-tRNA molecule with a 2',3'-cyclic phosphate end + an intron with a 2',3'-cyclic phosphate and a 5'-hydroxyl terminus.. Functionally, endonuclease that removes tRNA introns. Cleaves pre-tRNA at the 5'- and 3'-splice sites to release the intron. The products are an intron and two tRNA half-molecules bearing 2',3' cyclic phosphate and 5'-OH termini. Recognizes a pseudosymmetric substrate in which 2 bulged loops of 3 bases are separated by a stem of 4 bp. In Methanopyrus kandleri (strain AV19 / DSM 6324 / JCM 9639 / NBRC 100938), this protein is tRNA-splicing endonuclease.